The primary structure comprises 138 residues: Small ribosomal subunit protein uS12 (138 aa).

Residue aspartate 89 is modified to 3-methylthioaspartic acid. A disordered region spans residues 107-138 (VSGRMQRRSKYGAKFPKTGTGKTKAVPTKNKK).

Belongs to the universal ribosomal protein uS12 family. Part of the 30S ribosomal subunit. Contacts proteins S8 and S17. May interact with IF1 in the 30S initiation complex.

In terms of biological role, with S4 and S5 plays an important role in translational accuracy. Its function is as follows. Interacts with and stabilizes bases of the 16S rRNA that are involved in tRNA selection in the A site and with the mRNA backbone. Located at the interface of the 30S and 50S subunits, it traverses the body of the 30S subunit contacting proteins on the other side and probably holding the rRNA structure together. The combined cluster of proteins S8, S12 and S17 appears to hold together the shoulder and platform of the 30S subunit. This Azobacteroides pseudotrichonymphae genomovar. CFP2 protein is Small ribosomal subunit protein uS12.